Here is a 219-residue protein sequence, read N- to C-terminus: Glycerol-3-phosphate acyltransferase 2 (219 aa).

Transmembrane regions (helical) follow at residues 1-21, 55-75, 93-113, 135-155, and 160-180; these read MVFWIAGAVGLAIAYLLGSTP, WPALVVLLVDVLKGVGAVVFA, ALDLQSLEPWAVCLTGLAVLL, VLLAMSWPVGLGAAMVFGVAL, and IVSLSSMLAALTAIALVCGLE.

This sequence belongs to the PlsY family. In terms of assembly, probably interacts with PlsX.

The protein localises to the cell inner membrane. It carries out the reaction an acyl phosphate + sn-glycerol 3-phosphate = a 1-acyl-sn-glycero-3-phosphate + phosphate. It participates in lipid metabolism; phospholipid metabolism. Its function is as follows. Catalyzes the transfer of an acyl group from acyl-phosphate (acyl-PO(4)) to glycerol-3-phosphate (G3P) to form lysophosphatidic acid (LPA). This enzyme utilizes acyl-phosphate as fatty acyl donor, but not acyl-CoA or acyl-ACP. The sequence is that of Glycerol-3-phosphate acyltransferase 2 from Rhizobium johnstonii (strain DSM 114642 / LMG 32736 / 3841) (Rhizobium leguminosarum bv. viciae).